Reading from the N-terminus, the 968-residue chain is Ribonuclease E (968 aa).

One can recognise an S1 motif domain in the interval 39 to 119; sequence SNIYKGKITR…GTKGAALTTF (81 aa). Residues Asp-303 and Asp-346 each coordinate Mg(2+). Zn(2+)-binding residues include Cys-404 and Cys-407. The segment at 404 to 407 is required for zinc-mediated homotetramerization and catalytic activity; the sequence is CPRC. Residues 947-968 are disordered; that stretch reads IKNSAGAHSATNFSTSPVKKSE. Residues 955 to 968 show a composition bias toward polar residues; the sequence is SATNFSTSPVKKSE.

The protein belongs to the RNase E/G family. RNase E subfamily. Component of the RNA degradosome, which is a multiprotein complex involved in RNA processing and mRNA degradation. Within the RNA degradosome, RNase E assembles into a homotetramer formed by a dimer of dimers. The cofactor is Zn(2+). Mg(2+) serves as cofactor.

The protein localises to the cytoplasm. It is found in the cell inner membrane. It catalyses the reaction Endonucleolytic cleavage of single-stranded RNA in A- and U-rich regions.. Functionally, endoribonuclease that plays a central role in RNA processing and decay. Required for the maturation of 5S and 16S rRNAs and the majority of tRNAs. Also involved in the degradation of most mRNAs. The polypeptide is Ribonuclease E (Buchnera aphidicola subsp. Schizaphis graminum (strain Sg)).